Here is a 421-residue protein sequence, read N- to C-terminus: Histidine--tRNA ligase (421 aa).

The protein belongs to the class-II aminoacyl-tRNA synthetase family.

It is found in the cytoplasm. The enzyme catalyses tRNA(His) + L-histidine + ATP = L-histidyl-tRNA(His) + AMP + diphosphate + H(+). In Pyrobaculum islandicum (strain DSM 4184 / JCM 9189 / GEO3), this protein is Histidine--tRNA ligase.